Here is a 405-residue protein sequence, read N- to C-terminus: Tryptophan synthase beta chain (405 aa).

Lysine 98 bears the N6-(pyridoxal phosphate)lysine mark.

This sequence belongs to the TrpB family. In terms of assembly, tetramer of two alpha and two beta chains. It depends on pyridoxal 5'-phosphate as a cofactor.

It catalyses the reaction (1S,2R)-1-C-(indol-3-yl)glycerol 3-phosphate + L-serine = D-glyceraldehyde 3-phosphate + L-tryptophan + H2O. The protein operates within amino-acid biosynthesis; L-tryptophan biosynthesis; L-tryptophan from chorismate: step 5/5. Its function is as follows. The beta subunit is responsible for the synthesis of L-tryptophan from indole and L-serine. This chain is Tryptophan synthase beta chain, found in Xanthomonas campestris pv. campestris (strain 8004).